A 446-amino-acid chain; its full sequence is Exodeoxyribonuclease 7 large subunit (446 aa).

The protein belongs to the XseA family. As to quaternary structure, heterooligomer composed of large and small subunits.

It is found in the cytoplasm. It catalyses the reaction Exonucleolytic cleavage in either 5'- to 3'- or 3'- to 5'-direction to yield nucleoside 5'-phosphates.. In terms of biological role, bidirectionally degrades single-stranded DNA into large acid-insoluble oligonucleotides, which are then degraded further into small acid-soluble oligonucleotides. This Streptococcus pneumoniae (strain Taiwan19F-14) protein is Exodeoxyribonuclease 7 large subunit.